Here is a 625-residue protein sequence, read N- to C-terminus: Endo-1,4-beta-xylanase A (625 aa).

Residues methionine 1–alanine 19 form the signal peptide. The GH11 1 domain occupies valine 35–glutamate 231. The tract at residues aspartate 245 to serine 283 is disordered. Over residues serine 252 to glutamine 276 the composition is skewed to gly residues. The linker stretch occupies residues glycine 255–serine 279. 2 tandem repeats follow at residues glycine 259–asparagine 268 and glycine 269–glutamine 278. The segment at glycine 259–glutamine 278 is 2 X 10 AA tandem repeats of G-Q-G-[LQ]-G-N-G-Q-G-[NQ]. 2 consecutive CBM10 domains span residues lysine 285–glycine 324 and asparagine 332–glycine 371. The segment at asparagine 374–asparagine 403 is linker. The tract at residues threonine 379–serine 399 is disordered. The region spanning threonine 416–phenylalanine 617 is the GH11 2 domain. The active-site Nucleophile is the glutamate 510. Glutamate 603 (proton donor) is an active-site residue.

Belongs to the glycosyl hydrolase 11 (cellulase G) family.

It catalyses the reaction Endohydrolysis of (1-&gt;4)-beta-D-xylosidic linkages in xylans.. It participates in glycan degradation; xylan degradation. In terms of biological role, hydrolyzes 1,4-beta linked polysaccharide backbones of xylans, one of the major hemicellulose components in hardwoods and softwoods. It is more active against xylopentaose than xylotetraose, has trace activity against xylotriose. The major products released from hydrolysis of xylooligosaccharides are xylobiose and xylotriose. The reiterated 40 AA domain is involved in binding the cellulase-hemicellulase complex. The polypeptide is Endo-1,4-beta-xylanase A (XYNA) (Piromyces sp).